Here is a 188-residue protein sequence, read N- to C-terminus: Putative pre-16S rRNA nuclease (188 aa).

The interval 156–188 (LRQGDAAPGGSDDERDEDGDTDGEDGGGDGGGE) is disordered. Residues 166–188 (SDDERDEDGDTDGEDGGGDGGGE) show a composition bias toward acidic residues.

It belongs to the YqgF nuclease family.

The protein resides in the cytoplasm. In terms of biological role, could be a nuclease involved in processing of the 5'-end of pre-16S rRNA. The sequence is that of Putative pre-16S rRNA nuclease from Rhodospirillum centenum (strain ATCC 51521 / SW).